A 961-amino-acid polypeptide reads, in one-letter code: Endochitinase A (961 aa).

The N-terminal stretch at 1–21 is a signal peptide; sequence MAPKLFTFVSALSGLASLASA. The region spanning 28–339 is the GH18 domain; sequence SNIAVYYGQG…EKIREILYDL (312 aa). E175 serves as the catalytic Proton donor. Disordered stretches follow at residues 338–720, 767–787, 813–842, and 912–933; these read DLDP…TTTE, TDVP…TADI, PPAT…GEVS, and HVPV…ASPT. Over residues 342–355 the composition is skewed to pro residues; the sequence is NHPPPTTSPTPTPT. Low complexity-rich tracts occupy residues 356–510, 519–544, 552–604, and 612–635; these read PSTT…STSS, SSTS…PVIS, TSSS…PETT, and TPGS…PATS. The span at 636–665 shows a compositional bias: polar residues; that stretch reads GGHTETSTVSTSSANQTPSASTSKPLIPTN. Low complexity predominate over residues 666–720; the sequence is SASSTSTGSVTSTPSAPGVPSSSAGSDETATTSTTDSEPTSTSSGSVTAKPTTTE. A lipid anchor (GPI-anchor amidated glycine) is attached at G936. Positions 937–961 are cleaved as a propeptide — removed in mature form; that stretch reads AGSRYDVVKGVPALVALALSLLAVL.

This sequence belongs to the glycosyl hydrolase 18 family. Chitinase class III subfamily. Post-translationally, O-glycosylated but not N-glycosylated.

The protein resides in the cell membrane. It localises to the secreted. It is found in the cell wall. Its subcellular location is the cell tip. The catalysed reaction is Random endo-hydrolysis of N-acetyl-beta-D-glucosaminide (1-&gt;4)-beta-linkages in chitin and chitodextrins.. Its function is as follows. GPI-anchored chitinase involved in the degradation of chitin, a component of the cell walls of fungi and exoskeletal elements of some animals (including worms and arthropods). Required to reshape the cell wall at the sites where cell wall remodeling and/or cell wall maturation actively take place such as sites of conidia formation. The sequence is that of Endochitinase A (chiA) from Emericella nidulans (Aspergillus nidulans).